Consider the following 257-residue polypeptide: MIVEKRRFPSPSQHVRLYTICYLSNGLRVKGLLAEPAEPGQYDGFLYLRGGIKSVGMVRPGRIIQFASQGFVVFAPFYRGNQGGEGNEDFAGEDREDAFSAFRLLQQHPNVKKDRIHIFGFSRGGIMGMLTAIEMGGQAASFVSWGGVSDMILTYEERQDLRRMMKRVIGGTPKKVPEEYQWRTPFDQVNKIQAPVLLIHGEKDQNVSIQHSYLLEEKLKQLHKPVETWYYSTFTHYFPPKENRRIVRQLTQWMKNR.

Catalysis depends on charge relay system residues serine 122 and histidine 236.

Belongs to the peptidase S9B family.

This is an uncharacterized protein from Bacillus subtilis (strain 168).